A 115-amino-acid chain; its full sequence is Large ribosomal subunit protein uL22 (115 aa).

It belongs to the universal ribosomal protein uL22 family. Part of the 50S ribosomal subunit.

In terms of biological role, this protein binds specifically to 23S rRNA; its binding is stimulated by other ribosomal proteins, e.g. L4, L17, and L20. It is important during the early stages of 50S assembly. It makes multiple contacts with different domains of the 23S rRNA in the assembled 50S subunit and ribosome. The globular domain of the protein is located near the polypeptide exit tunnel on the outside of the subunit, while an extended beta-hairpin is found that lines the wall of the exit tunnel in the center of the 70S ribosome. This is Large ribosomal subunit protein uL22 from Lactiplantibacillus plantarum (strain ATCC BAA-793 / NCIMB 8826 / WCFS1) (Lactobacillus plantarum).